A 21-amino-acid polypeptide reads, in one-letter code: Cupiennin-6e (21 aa).

At Ser21 the chain carries Serine amide.

In terms of tissue distribution, expressed by the venom gland.

It is found in the secreted. The protein is Cupiennin-6e of Cupiennius salei (American wandering spider).